We begin with the raw amino-acid sequence, 319 residues long: Acetyl-coenzyme A carboxylase carboxyl transferase subunit alpha (319 aa).

One can recognise a CoA carboxyltransferase C-terminal domain in the interval D35–E296.

The protein belongs to the AccA family. Acetyl-CoA carboxylase is a heterohexamer composed of biotin carboxyl carrier protein (AccB), biotin carboxylase (AccC) and two subunits each of ACCase subunit alpha (AccA) and ACCase subunit beta (AccD).

The protein resides in the cytoplasm. It carries out the reaction N(6)-carboxybiotinyl-L-lysyl-[protein] + acetyl-CoA = N(6)-biotinyl-L-lysyl-[protein] + malonyl-CoA. Its pathway is lipid metabolism; malonyl-CoA biosynthesis; malonyl-CoA from acetyl-CoA: step 1/1. Its function is as follows. Component of the acetyl coenzyme A carboxylase (ACC) complex. First, biotin carboxylase catalyzes the carboxylation of biotin on its carrier protein (BCCP) and then the CO(2) group is transferred by the carboxyltransferase to acetyl-CoA to form malonyl-CoA. The protein is Acetyl-coenzyme A carboxylase carboxyl transferase subunit alpha of Vibrio atlanticus (strain LGP32) (Vibrio splendidus (strain Mel32)).